Consider the following 691-residue polypeptide: Elongation factor G (691 aa).

Positions 8-282 (ERVRNIGIAA…AVVNYLPAPV (275 aa)) constitute a tr-type G domain. Residues 17-24 (AHIDAGKT), 81-85 (DTPGH), and 135-138 (NKMD) each bind GTP.

The protein belongs to the TRAFAC class translation factor GTPase superfamily. Classic translation factor GTPase family. EF-G/EF-2 subfamily.

The protein localises to the cytoplasm. In terms of biological role, catalyzes the GTP-dependent ribosomal translocation step during translation elongation. During this step, the ribosome changes from the pre-translocational (PRE) to the post-translocational (POST) state as the newly formed A-site-bound peptidyl-tRNA and P-site-bound deacylated tRNA move to the P and E sites, respectively. Catalyzes the coordinated movement of the two tRNA molecules, the mRNA and conformational changes in the ribosome. The protein is Elongation factor G of Prochlorococcus marinus (strain NATL1A).